The primary structure comprises 278 residues: MMLEARTAFTLLTVLPLRGPEHTDRRLAGRAMALAPFVGLALGLLAGSAVFATRIVTAVPGQRAQTLLPAVVGVTVLALVTRGLHLDGLADLGDGLGAWRARGRDRALEIMRESTIGAFGAIIVLFVVLLQVGALSTTISAHRGTLSILVAAMTSRLAATLACTGAVPPARPDGLGALVAGTVRTRDAALSFLAVCAVAALAGLLDFDGGGPGRALRAVLAVWVGTGVSFLLRRYLLTRFGGITGDILGGLIEITAAATLLVMAMTIPTPVLHTLGLH.

Helical transmembrane passes span 31–51 (AMAL…SAVF), 66–86 (TLLP…GLHL), 115–135 (TIGA…VGAL), 148–168 (ILVA…GAVP), 187–207 (DAAL…LLDF), 215–237 (ALRA…RYLL), and 247–267 (ILGG…AMTI).

The protein belongs to the CobS family. Mg(2+) is required as a cofactor.

It localises to the cell membrane. It carries out the reaction alpha-ribazole + adenosylcob(III)inamide-GDP = adenosylcob(III)alamin + GMP + H(+). The enzyme catalyses alpha-ribazole 5'-phosphate + adenosylcob(III)inamide-GDP = adenosylcob(III)alamin 5'-phosphate + GMP + H(+). Its pathway is cofactor biosynthesis; adenosylcobalamin biosynthesis; adenosylcobalamin from cob(II)yrinate a,c-diamide: step 7/7. Its function is as follows. Joins adenosylcobinamide-GDP and alpha-ribazole to generate adenosylcobalamin (Ado-cobalamin). Also synthesizes adenosylcobalamin 5'-phosphate from adenosylcobinamide-GDP and alpha-ribazole 5'-phosphate. The chain is Adenosylcobinamide-GDP ribazoletransferase from Frankia casuarinae (strain DSM 45818 / CECT 9043 / HFP020203 / CcI3).